The primary structure comprises 153 residues: Large ribosomal subunit protein uL15 (153 aa).

The interval 21–41 (RGIGSGKGKTGGRGIKGQKSR) is disordered. A compositionally biased stretch (gly residues) spans 23 to 35 (IGSGKGKTGGRGI).

Belongs to the universal ribosomal protein uL15 family. As to quaternary structure, part of the 50S ribosomal subunit.

Functionally, binds to the 23S rRNA. The chain is Large ribosomal subunit protein uL15 from Rickettsia felis (strain ATCC VR-1525 / URRWXCal2) (Rickettsia azadi).